Here is a 6781-residue protein sequence, read N- to C-terminus: Replicase polyprotein 1ab (6781 aa).

Residues 2–109 (ASNHVTLAFA…ELELTFGRRG (108 aa)) enclose the CoV Nsp1 globular domain. SsDNA-binding residues include Glu59, Asn95, Glu99, and Glu102. The CoV Nsp2 N-terminal domain maps to 112–364 (IVPVDQYMCG…TKLKFDILSG (253 aa)). One can recognise a CoV Nsp2 middle domain in the interval 383 to 776 (SALVDIVDDA…AEMYNTYLST (394 aa)). The CoV Nsp2 C-terminal domain occupies 778–895 (VENLVLAGVS…VPICFKKKGG (118 aa)). The Ubiquitin-like 1 domain occupies 896 to 991 (GDVKFSDEVS…VMVSQWPLND (96 aa)). Residues 1009–1040 (IDSEGDEVDSSAPEKVADVANSEPGDDGLPVA) form a disordered region. A Peptidase C16 1 domain is found at 1057–1296 (SFIKDTPSTV…EPVVKPFYSY (240 aa)). Cys1091 (for PL1-PRO activity) is an active-site residue. The segment at 1162–1193 (CGCGTGERIYEGCAFRMTPTLEPFPYGACAQC) adopts a C4-type 1; degenerate zinc-finger fold. Catalysis depends on for PL1-PRO activity residues His1239 and Asp1252. A Macro domain is found at 1297–1465 (KNVDFYQGDF…IFKEALVDTT (169 aa)). Residues 1630-1685 (NKSVVIKVTEDTRSVKAVKVESTATYGQQIGPCLVNDTVVTDNKPVVADVVAKVVP) enclose the Ubiquitin-like 2 domain. The Peptidase C16 2 domain occupies 1691–1951 (SHYGFDKAGE…LLDTMNYASE (261 aa)). Cys1729 serves as the catalytic For PL2-PRO activity. Residues 1808 to 1838 (DGCCCSKRVVTAPVVNASVLKLGVEDGLCPH) form a C4-type 2; degenerate zinc finger. Residues His1888 and Asp1901 each act as for PL2-PRO activity in the active site. 2 helical membrane passes run 1959-1979 (FMSR…GLCF) and 2022-2042 (WFKV…LLFM). The interval 1959–2170 (FMSRNLITVF…FGDEIVVFFI (212 aa)) is HD1. The 65-residue stretch at 2038–2102 (ALLFMTIRFT…TQVVWQHLRD (65 aa)) folds into the 3Ecto domain. Cystine bridges form between Cys2054/Cys2080 and Cys2072/Cys2077. 3 helical membrane passes run 2105-2125 (IGNV…GVYV), 2127-2147 (AITL…LGLQ), and 2150-2170 (IWFL…VFFI). The segment at 2176 to 2266 (MFIKHVCLGC…VVKLNVQPTG (91 aa)) is Y1. The region spanning 2176–2516 (MFIKHVCLGC…PTVCIANKKG (341 aa)) is the CoV Nsp3 Y domain. His2180, Cys2185, Cys2190, Cys2193, Cys2226, His2229, Cys2233, and Cys2236 together coordinate Zn(2+). Residues 2180-2193 (HVCLGCDKASCVAC) are ZF1. A ZF2 region spans residues 2226 to 2236 (CKKHNFFCLNC). The Y2 stretch occupies residues 2267-2356 (PATILIDKVE…LVDSALLASL (90 aa)). Residues 2267-2516 (PATILIDKVE…PTVCIANKKG (250 aa)) form a coV-Y region. Residues 2357-2414 (SVDFGASLHSAFVSVLSNSFGKDLSSCNDMQDCKSTLGFDDVPLDTFNAAVAEAHRYD) form a Y3 region. Positions 2415–2516 (VLLTDMSFNN…PTVCIANKKG (102 aa)) are Y4. 7 consecutive transmembrane segments (helical) span residues 2528–2548 (FFWF…FLDF), 2619–2639 (IPAG…TIFG), 2654–2674 (GACI…TAVY), 2754–2774 (GSDF…ISVF), 2787–2807 (ILFN…FTKF), 2814–2834 (MSVG…SYIV), and 2863–2883 (LGFL…VYAF). Residues 2528–2883 (FFWFLCLFIV…PWWVLMVYAF (356 aa)) form an HD2 region. The Nsp4C domain occupies 2902–2997 (LFEGDKFVGS…PTVSYNSTLQ (96 aa)). Residues 2998–3299 (AGLRKMAQPS…VRQMYGVNLQ (302 aa)) enclose the Peptidase C30 domain. Active-site for 3CL-PRO activity residues include His3038 and Cys3141. 7 helical membrane passes run 3336–3356 (GYVT…MFTL), 3361–3381 (LFFQ…NLAF), 3399–3419 (LMGF…VTIL), 3431–3451 (PASS…YFYA), 3454–3474 (ILSC…VGAV), 3476–3496 (YKVA…FGDI), and 3500–3520 (MFCY…LYWF). Positions 3336-3520 (GYVTPMFACL…CCFYGILYWF (185 aa)) are HD3. Residues 3580-3662 (SKLTDIKCSN…SYFNDNSMLQ (83 aa)) enclose the RdRp Nsp7 cofactor domain. One can recognise a RdRp Nsp8 cofactor domain in the interval 3663 to 3857 (SVASTYVGLP…LGCERIVKLQ (195 aa)). In terms of domain architecture, Nsp9 ssRNA-binding spans 3858 to 3965 (NNEIIPGKLK…GYIGATVRLQ (108 aa)). The region spanning 3966–4103 (AGKQTEQAIN…CDRSIMQSTD (138 aa)) is the ExoN/MTase coactivator domain. Zn(2+) contacts are provided by Cys4039, Cys4042, His4048, Cys4055, Cys4081, Cys4084, Cys4092, and Cys4094. Zinc fingers lie at residues 4039–4055 (CLYC…DGFC) and 4081–4094 (CKVC…GCTC). Positions 4106 to 4355 (YLNRVRGSSA…ASECFVKSDI (250 aa)) constitute a NiRAN domain. The region spanning 4361–4459 (KSYDLLEYDF…WNNDLNLHSS (99 aa)) is the Nsp12 Interface domain. Zn(2+) is bound by residues His4390, Cys4396, Cys4401, Cys4405, and Cys4582. The 568-residue stretch at 4460 to 5027 (RLSINELLQF…NMYEKSAVLQ (568 aa)) folds into the Nsp12 RNA-dependent RNA polymerase domain. The segment at 4462 to 4676 (SINELLQFCS…HQKHLKSIVN (215 aa)) is rdRp Fingers N-ter. Residues 4677–4715 (TRGASVVIGTTKFYGGWDNMLKNLIDGVENPCLMGWDYP) form a rdRp Palm N-ter region. Residues 4707–4869 (PCLMGWDYPK…CYNNDYASLG (163 aa)) enclose the RdRp catalytic domain. The segment at 4716 to 4774 (KCDRALPNMIRMISAMILGSKHTTCCSSTDRFFRLCNELAQVLTEVVYSNGGFYLKPGG) is rdRp Fingers C-ter. 3 residues coordinate Zn(2+): His4737, Cys4740, and Cys4741. Positions 4775–4910 (TTSGDATTAY…NKGPHEFCSQ (136 aa)) are rdRp Palm C-ter. Active-site for RNA-directed RNA polymerase activity residues include Ser4854, Asp4855, and Asp4856. Residues 4911–5027 (HTMQIVDKEG…NMYEKSAVLQ (117 aa)) are rdRp Thumb. The CV ZBD domain maps to 5028-5140 (SAGLCVVCGS…EDFNRIATSD (113 aa)). Zn(2+)-binding residues include Cys5032, Cys5035, Cys5043, Cys5046, Cys5053, Cys5056, His5060, His5066, Cys5077, Cys5082, Cys5099, and His5102. Residues 5275 to 5466 (STIHKLHPAF…MCALKPDVFL (192 aa)) enclose the (+)RNA virus helicase ATP-binding domain. 5310–5317 (GPPGSGKS) lines the ATP pocket. The (+)RNA virus helicase C-terminal domain occupies 5467–5636 (HKCYRCPAEI…EGCGLFKDCS (170 aa)). The ExoN domain occupies 5696-5910 (LFCTRDFAMR…RCLAIHDCFV (215 aa)). Residues Asp5714, Glu5716, and Glu5815 each act as for exoribonuclease activity in the active site. Zn(2+) contacts are provided by Cys5831, Cys5833, Cys5849, His5852, His5880, Cys5884, and His5887. Residues His5891 and Asp5896 each act as for exoribonuclease activity in the active site. A Zn(2+)-binding site is contributed by Cys5902. The region spanning 5919–6140 (YPFIGNEAVI…NLWQTFSNNL (222 aa)) is the N7-MTase domain. An S-adenosyl-L-methionine-binding site is contributed by 5954–5960 (DIGNPKG). The gpppA-binding stretch occupies residues 6031–6045 (CNGGSLYVNNHAFHT). Zn(2+)-binding residues include Cys6069, Cys6086, Cys6097, and His6100. The Nsp15 N-terminal oligomerization domain occupies 6142 to 6202 (GLENIAFNVL…NVAFELYAKR (61 aa)). Residues 6203-6320 (KVGLTPPITI…IYTRKNGKFE (118 aa)) form the AV-Nsp11N/CoV-Nsp15M domain. The NendoU domain occupies 6337–6477 (SPRSDMEKDF…KDHKLQTFYP (141 aa)). Catalysis depends on for uridylate-specific endoribonuclease activity residues His6367, His6382, and Lys6423. A Nidovirus-type SAM-dependent 2'-O-MTase domain is found at 6481–6777 (ASEWKCGYSM…AICGFSNHLV (297 aa)). Catalysis depends on for 2'-O-methyltransferase residues Lys6525, Asp6609, Lys6649, and Glu6682.

The protein belongs to the coronaviruses polyprotein 1ab family. As to quaternary structure, interacts with PL-PRO and nsp6. In terms of assembly, monomer. Homodimer; disulfide-linked. Interacts with nsp8 and nsp12 to form the replication-transcription complex (RTC): nsp12, nsp7, two subunits of nsp8, and up to two subunits of nsp13. Eight copies of nsp7 and eight copies of nsp8 assemble to form a heterohexadecamer dsRNA-encircling ring structure. As to quaternary structure, interacts with nsp7, nsp13 and nsp12 to form the replication-transcription complex (RTC): nsp12, nsp7, two subunits of nsp8, and up to two subunits of nsp13. Eight copies of nsp7 and eight copies of nsp8 assemble to form a heterohexadecamer dsRNA-encircling ring structure. In terms of assembly, homodimer. Forms a dodecamer and interacts with nsp14 and nsp16; these interactions enhance nsp14 and nsp16 enzymatic activities. The cofactor is Mn(2+). Post-translationally, specific enzymatic cleavages in vivo by its own proteases yield mature proteins. 3CL-PRO and PL-PRO proteinases are autocatalytically processed.

It localises to the host cytoplasm. The protein resides in the host nucleus. The protein localises to the host membrane. Its subcellular location is the host perinuclear region. It is found in the host endoplasmic reticulum. It localises to the host endoplasmic reticulum-Golgi intermediate compartment. The enzyme catalyses Thiol-dependent hydrolysis of ester, thioester, amide, peptide and isopeptide bonds formed by the C-terminal Gly of ubiquitin (a 76-residue protein attached to proteins as an intracellular targeting signal).. It carries out the reaction a 5'-end diphospho-ribonucleoside in mRNA + GTP + H(+) = a 5'-end (5'-triphosphoguanosine)-ribonucleoside in mRNA + diphosphate. The catalysed reaction is RNA(n) + a ribonucleoside 5'-triphosphate = RNA(n+1) + diphosphate. It catalyses the reaction ATP + H2O = ADP + phosphate + H(+). The enzyme catalyses a 5'-end (5'-triphosphoguanosine)-ribonucleoside in mRNA + S-adenosyl-L-methionine = a 5'-end (N(7)-methyl 5'-triphosphoguanosine)-ribonucleoside in mRNA + S-adenosyl-L-homocysteine. It carries out the reaction uridylyl-uridylyl-ribonucleotide-RNA = a 3'-end uridylyl-2',3'-cyclophospho-uridine-RNA + a 5'-end dephospho-ribonucleoside-RNA. The catalysed reaction is a 5'-end (N(7)-methyl 5'-triphosphoguanosine)-ribonucleoside in mRNA + S-adenosyl-L-methionine = a 5'-end (N(7)-methyl 5'-triphosphoguanosine)-(2'-O-methyl-ribonucleoside) in mRNA + S-adenosyl-L-homocysteine + H(+). Inhibited by the substrate-analog Cbz-Val-Asn-Ser-Thr-Leu-Gln-CMK. Inhibited by (R)-16. Its function is as follows. Multifunctional protein responsible for the transcription of negative stranded RNA, leader RNA, subgenomic mRNAs and progeny virion RNA as well as proteinases responsible for the cleavage of the polyprotein into functional products. Functionally, plays a role in the inhibition of host interferon and pro-inflammatory cytokines production. Suppresses host RELA/p65 activation by blocking NFKBIA phosphorylation. Targets also the RLR pathway downstream of the IRF3 activation by targeting host CREBBP to proteasomal degradation. Responsible for the cleavages located at the N-terminus of the replicase polyprotein. Participates together with nsp4 in the assembly of virally-induced cytoplasmic double-membrane vesicles necessary for viral replication. Forms a molecular pore spanning the double membrane of the coronavirus replication organelle. In addition, PLP2 possesses a deubiquitinating/deISGylating activity and processes both 'Lys-48'- and 'Lys-63'-linked polyubiquitin chains from cellular substrates. PLP2 also antagonizes innate immune induction of type I interferon by blocking the nuclear translocation of host IRF-3. Participates in the inhibition of the integrated stress response (ISR) in the infected host cell. In terms of biological role, participates in the assembly of virally-induced cytoplasmic double-membrane vesicles necessary for viral replication. Its function is as follows. Responsible for the majority of cleavages as it cleaves the C-terminus of replicase polyprotein at 11 sites. Recognizes substrates containing the core sequence [ILMVF]-Q-|-[SGACN]. Also contains an ADP-ribose-1''-phosphate (ADRP)-binding function. Participates in the inhibition of the integrated stress response (ISR) in the infected host cell. Functionally, plays a role in the initial induction of autophagosomes from host endoplasmic reticulum. Later, limits the expansion of these phagosomes that are no longer able to deliver viral components to lysosomes. Plays a role in viral RNA synthesis. Forms a hexadecamer with nsp8 (8 subunits of each) that may participate in viral replication by acting as a primase. Alternatively, may synthesize substantially longer products than oligonucleotide primers. In terms of biological role, plays a role in viral RNA synthesis. Forms a hexadecamer with nsp7 (8 subunits of each) that may participate in viral replication by acting as a primase. Alternatively, may synthesize substantially longer products than oligonucleotide primers. Its function is as follows. Forms a primer, NSP9-pU, which is utilized by the polymerase for the initiation of RNA chains. Interacts with ribosome signal recognition particle RNA (SRP). Together with NSP8, suppress protein integration into the cell membrane, thereby disrupting host immune defenses. Functionally, plays a pivotal role in viral transcription by stimulating both nsp14 3'-5' exoribonuclease and nsp16 2'-O-methyltransferase activities. Therefore plays an essential role in viral mRNAs cap methylation. RNA-directed RNA polymerase that catalyzes the transcription of viral genomic and subgenomic RNAs. Acts in complex with nsp7 and nsp8 to transcribe both the minus and positive strands of genomic RNA. The kinase-like NiRAN domain of NSP12 attaches one or more nucleotides to the amino terminus of NSP9, forming a covalent RNA-protein intermediate that serves as transcription/replication primer. Subgenomic RNAs (sgRNAs) are formed by discontinuous transcription: The polymerase has the ability to pause at transcription-regulating sequences (TRS) and jump to the leader TRS, resulting in a major deletion. This creates a series of subgenomic RNAs that are replicated, transcribed and translated. In addition, Nsp12 is a subunit of the viral RNA capping enzyme that catalyzes the RNA guanylyltransferase reaction for genomic and sub-genomic RNAs. Subsequently, the NiRAN domain transfers RNA to GDP, and forms the core cap structure GpppA-RNA. In terms of biological role, plays a role in viral RNA synthesis. Multi-functional protein with a zinc-binding domain in N-terminus displaying RNA and DNA duplex-unwinding activities with 5' to 3' polarity. ATPase activity is strongly stimulated by poly(U), poly(dT), poly(C), poly(dA), but not by poly(G). Its function is as follows. Plays a role in viral RNA synthesis through two distinct activities. The N7-guanine methyltransferase activity plays a role in the formation of the cap structure GpppA-RNA. The proofreading exoribonuclease reduces the sensitivity of the virus to RNA mutagens during replication. This activity acts on both ssRNA and dsRNA in a 3'-5' direction. Functionally, plays a role in viral transcription/replication and prevents the simultaneous activation of host cell dsRNA sensors, such as MDA5/IFIH1, OAS, and PKR. Acts by degrading the 5'-polyuridines generated during replication of the poly(A) region of viral genomic and subgenomic RNAs. Catalyzes a two-step reaction in which a 2'3'-cyclic phosphate (2'3'-cP) is first generated by 2'-O transesterification, which is then hydrolyzed to a 3'-phosphate (3'-P). If not degraded, poly(U) RNA would hybridize with poly(A) RNA tails and activate host dsRNA sensors. Decreases the RNA levels and thus the expression of host TBK1 and IRF3, antagonizing the host innate response. In Sus scrofa (Pig), this protein is Replicase polyprotein 1ab (rep).